The chain runs to 306 residues: Anamorsin (306 aa).

The segment at 6 to 172 is N-terminal SAM-like domain; it reads IAPGQRVAVI…KPNFEVGSSS (167 aa). Residues 173-224 are linker; the sequence is QLKLSFAKKTSPSGKPSVDPATAKLWTLSASDMNDEEMDLLDSDELLDSEDL. The [2Fe-2S] cluster site is built by Cys-237, Cys-246, Cys-249, and Cys-251. A fe-S binding site A region spans residues 237–251; that stretch reads CKEKGKKKACKNCTC. [4Fe-4S] cluster contacts are provided by Cys-270, Cys-273, Cys-281, and Cys-284. Short sequence motifs (cx2C motif) lie at residues 270 to 273 and 281 to 284; these read CGNC and CASC. The tract at residues 270–284 is fe-S binding site B; that stretch reads CGNCYLGDAFRCASC.

The protein belongs to the anamorsin family. As to quaternary structure, monomer. Interacts with NDOR1. Interacts with CHCHD4. It depends on [2Fe-2S] cluster as a cofactor. The cofactor is [4Fe-4S] cluster.

Its subcellular location is the cytoplasm. It localises to the nucleus. It is found in the mitochondrion intermembrane space. In terms of biological role, component of the cytosolic iron-sulfur (Fe-S) protein assembly (CIA) machinery required for the maturation of extramitochondrial Fe-S proteins. Part of an electron transfer chain functioning in an early step of cytosolic Fe-S biogenesis, facilitating the de novo assembly of a [4Fe-4S] cluster on the scaffold complex NUBP1-NUBP2. Electrons are transferred to CIAPIN1 from NADPH via the FAD- and FMN-containing protein NDOR1. NDOR1-CIAPIN1 are also required for the assembly of the diferric tyrosyl radical cofactor of ribonucleotide reductase (RNR), probably by providing electrons for reduction during radical cofactor maturation in the catalytic small subunit. Has anti-apoptotic effects in the cell. Involved in negative control of cell death upon cytokine withdrawal. Promotes development of hematopoietic cells. The chain is Anamorsin from Gallus gallus (Chicken).